A 1065-amino-acid chain; its full sequence is N-terminal acetyltransferase B complex auxiliary subunit NAA25 (1065 aa).

A TPR repeat occupies 294–327; sequence VDKLRIQGRLLARANDYSAAVDVYKKILELSPDD.

This sequence belongs to the MDM20/NAA25 family. In terms of tissue distribution, ubiquitously expressed, with a higher expression in vascular bundles, hydathodes, leaf primordia and the base of the trichomes.

It is found in the cytoplasm. Auxiliary subunit of the NatB N-alpha-acetyltransferase complex. Required for flowering time regulation and for vegetative and reproductive plant development. This is N-terminal acetyltransferase B complex auxiliary subunit NAA25 from Arabidopsis thaliana (Mouse-ear cress).